Reading from the N-terminus, the 590-residue chain is L-fucose isomerase (590 aa).

Catalysis depends on proton acceptor residues Glu-337 and Asp-361. The Mn(2+) site is built by Glu-337, Asp-361, and His-528.

The protein belongs to the L-fucose isomerase family. The cofactor is Mn(2+).

Its subcellular location is the cytoplasm. The enzyme catalyses L-fucose = L-fuculose. The protein operates within carbohydrate degradation; L-fucose degradation; L-lactaldehyde and glycerone phosphate from L-fucose: step 1/3. Its function is as follows. Converts the aldose L-fucose into the corresponding ketose L-fuculose. The chain is L-fucose isomerase from Bacteroides fragilis (strain ATCC 25285 / DSM 2151 / CCUG 4856 / JCM 11019 / LMG 10263 / NCTC 9343 / Onslow / VPI 2553 / EN-2).